Here is a 488-residue protein sequence, read N- to C-terminus: Ribulose bisphosphate carboxylase large chain (488 aa).

The substrate site is built by N127 and T177. K179 acts as the Proton acceptor in catalysis. K181 serves as a coordination point for substrate. K205, D207, and E208 together coordinate Mg(2+). At K205 the chain carries N6-carboxylysine. H297 acts as the Proton acceptor in catalysis. Residues R298, H330, and S382 each coordinate substrate.

Belongs to the RuBisCO large chain family. Type I subfamily. In terms of assembly, heterohexadecamer of 8 large chains and 8 small chains. The cofactor is Mg(2+).

The protein resides in the plastid. It is found in the chloroplast. The enzyme catalyses 2 (2R)-3-phosphoglycerate + 2 H(+) = D-ribulose 1,5-bisphosphate + CO2 + H2O. It carries out the reaction D-ribulose 1,5-bisphosphate + O2 = 2-phosphoglycolate + (2R)-3-phosphoglycerate + 2 H(+). In terms of biological role, ruBisCO catalyzes two reactions: the carboxylation of D-ribulose 1,5-bisphosphate, the primary event in carbon dioxide fixation, as well as the oxidative fragmentation of the pentose substrate in the photorespiration process. Both reactions occur simultaneously and in competition at the same active site. The chain is Ribulose bisphosphate carboxylase large chain (rbcL) from Pyropia dentata (Red alga).